The sequence spans 253 residues: Trypsin delta (253 aa).

Residues 1-22 form the signal peptide; that stretch reads MLKFVILLSAVACALGGTVPEG. The propeptide at 23–30 is activation peptide; sequence LLPQLDGR. Residues 31-253 enclose the Peptidase S1 domain; it reads IVGGSATTIS…ALRSWVISNA (223 aa). Residues Cys56 and Cys72 are joined by a disulfide bond. Residues His71 and Asp116 each act as charge relay system in the active site. 2 cysteine pairs are disulfide-bonded: Cys180/Cys197 and Cys206/Cys230. The active-site Charge relay system is Ser210.

The protein belongs to the peptidase S1 family.

It localises to the secreted. The protein localises to the extracellular space. It carries out the reaction Preferential cleavage: Arg-|-Xaa, Lys-|-Xaa.. This Drosophila melanogaster (Fruit fly) protein is Trypsin delta.